A 202-amino-acid chain; its full sequence is MEKDFFRKNGIDLAKSILGKYLIRKYENKVIVTKIIETEAYMGVNDKGAHVYGNKKTDRTKPLYLDGGHIYVYLIYGMYNCLNLSANIENVPECVLIRGVEPITSLDEISMNRYNKAYTELSKYQVKNITNGPGKLCKALKIDRSLNSKSIMGEELYISDFYYDDKGKKVFSKDELDIKTSKRINIDYAEEAKDFLWRFYIE.

It belongs to the DNA glycosylase MPG family.

This Clostridioides difficile (strain 630) (Peptoclostridium difficile) protein is Putative 3-methyladenine DNA glycosylase.